The primary structure comprises 274 residues: Putative HTH-type transcriptional regulator RmpR (274 aa).

An HTH gntR-type domain is found at 18–88 (IERADAIVER…RSGGTFVVNQ (71 aa)). Positions 46–65 (EAALSEMFGVGGATLREALS) form a DNA-binding region, H-T-H motif. Residues 250-265 (SRPSSPATAPDGSSSA) show a composition bias toward polar residues. A disordered region spans residues 250–274 (SRPSSPATAPDGSSSAEAAMIQEGQ).

May regulate the transcription of the rmpAB operon. This chain is Putative HTH-type transcriptional regulator RmpR (rmpR), found in Mycobacterium gastri.